A 322-amino-acid polypeptide reads, in one-letter code: tRNA U34 carboxymethyltransferase (322 aa).

Residues Lys-92, Trp-106, Lys-111, Gly-131, 153–155 (DPT), 181–182 (VE), Met-196, Tyr-200, and Arg-315 each bind carboxy-S-adenosyl-L-methionine.

This sequence belongs to the class I-like SAM-binding methyltransferase superfamily. CmoB family. In terms of assembly, homotetramer.

The enzyme catalyses carboxy-S-adenosyl-L-methionine + 5-hydroxyuridine(34) in tRNA = 5-carboxymethoxyuridine(34) in tRNA + S-adenosyl-L-homocysteine + H(+). In terms of biological role, catalyzes carboxymethyl transfer from carboxy-S-adenosyl-L-methionine (Cx-SAM) to 5-hydroxyuridine (ho5U) to form 5-carboxymethoxyuridine (cmo5U) at position 34 in tRNAs. In Colwellia psychrerythraea (strain 34H / ATCC BAA-681) (Vibrio psychroerythus), this protein is tRNA U34 carboxymethyltransferase.